The primary structure comprises 124 residues: Ribonuclease P protein component (124 aa).

This sequence belongs to the RnpA family. In terms of assembly, consists of a catalytic RNA component (M1 or rnpB) and a protein subunit.

The enzyme catalyses Endonucleolytic cleavage of RNA, removing 5'-extranucleotides from tRNA precursor.. Functionally, RNaseP catalyzes the removal of the 5'-leader sequence from pre-tRNA to produce the mature 5'-terminus. It can also cleave other RNA substrates such as 4.5S RNA. The protein component plays an auxiliary but essential role in vivo by binding to the 5'-leader sequence and broadening the substrate specificity of the ribozyme. The polypeptide is Ribonuclease P protein component (Mycolicibacterium gilvum (strain PYR-GCK) (Mycobacterium gilvum (strain PYR-GCK))).